The chain runs to 241 residues: Uridylate kinase (241 aa).

ATP is bound by residues 10–13 (KLSG), G53, and R57. UMP-binding positions include D72 and 133-140 (AGSPYFST). Residues N161, Y167, and D170 each coordinate ATP.

It belongs to the UMP kinase family. As to quaternary structure, homohexamer.

It localises to the cytoplasm. The catalysed reaction is UMP + ATP = UDP + ADP. Its pathway is pyrimidine metabolism; CTP biosynthesis via de novo pathway; UDP from UMP (UMPK route): step 1/1. With respect to regulation, inhibited by UTP. In terms of biological role, catalyzes the reversible phosphorylation of UMP to UDP. The chain is Uridylate kinase from Aster yellows witches'-broom phytoplasma (strain AYWB).